A 613-amino-acid chain; its full sequence is NADH-quinone oxidoreductase subunit L (613 aa).

Residues 1 to 6 (MNMLAL) lie on the Periplasmic side of the membrane. The chain crosses the membrane as a helical span at residues 7–23 (TIILPLIGFVLLAFSRG). Residues 24 to 31 (RWSENVSA) lie on the Cytoplasmic side of the membrane. The helical transmembrane segment at 32-52 (IVGVGSVGLAALVTAFIGVDF) threads the bilayer. Over 53–74 (FANGEQTYSQPLWTWMSVGDFN) the chain is Periplasmic. Residues 75-99 (IGFNLVLDGLSLTMLSVVTGVGFLI) traverse the membrane as a helical segment. Residues 100–115 (HMYASWYMRGEEGYSR) are Cytoplasmic-facing. The helical transmembrane segment at 116–133 (FFAYTNLFIASMVVLVLA) threads the bilayer. Topologically, residues 134–210 (DNLLLMYLGW…VELAPAHFAD (77 aa)) are periplasmic. The helical transmembrane segment at 211-228 (GNNMLMWATLMLLGGAVG) threads the bilayer. Topologically, residues 229–248 (KSAQLPLQTWLADAMAGPTP) are cytoplasmic. The helical transmembrane segment at 249–267 (VSALIHAATMVTAGVYLIA) threads the bilayer. At 268–281 (RTHGLFLMTPEVLH) the chain is on the periplasmic side. The chain crosses the membrane as a helical span at residues 282 to 300 (LVGIVGAVTLLLAGFAALV). Residues 301–306 (QTDIKR) are Cytoplasmic-facing. The chain crosses the membrane as a helical span at residues 307–325 (VLAYSTMSQIGYMFLALGV). At 326–338 (QAWDAAIFHLMTH) the chain is on the periplasmic side. Residues 339 to 356 (AFFKALLFLASGSVILAC) form a helical membrane-spanning segment. At 357-373 (HHEQNIFKMGGLRKSIP) the chain is on the cytoplasmic side. Residues 374-397 (LVYLCFLVGGAALSALPLVTAGFF) form a helical membrane-spanning segment. Over 398-413 (SKDEILAGAMANGHIN) the chain is Periplasmic. Residues 414 to 437 (LMVAGLVGAFMTSLYTFRMIFIVF) traverse the membrane as a helical segment. The Cytoplasmic portion of the chain corresponds to 438–454 (HGKEQIHAHAVKGVTHS). A helical transmembrane segment spans residues 455 to 472 (LPLIVLLILSTFVGALIV). At 473–494 (PPLQGVLPQTTELAHGSMLTLE) the chain is on the periplasmic side. A helical transmembrane segment spans residues 495–514 (ITSGVVAVVGILLAAWLWLG). Residues 515-589 (KRTLVTSIAN…GKGLLLSENG (75 aa)) are Cytoplasmic-facing. Residues 590–607 (YLRWYVASMSIGAVVVLA) traverse the membrane as a helical segment. Residues 608–613 (LLMVLR) lie on the Periplasmic side of the membrane.

Belongs to the complex I subunit 5 family. As to quaternary structure, composed of 13 different subunits. Subunits NuoA, H, J, K, L, M, N constitute the membrane sector of the complex.

Its subcellular location is the cell inner membrane. It catalyses the reaction a quinone + NADH + 5 H(+)(in) = a quinol + NAD(+) + 4 H(+)(out). NDH-1 shuttles electrons from NADH, via FMN and iron-sulfur (Fe-S) centers, to quinones in the respiratory chain. The immediate electron acceptor for the enzyme in this species is believed to be ubiquinone. Couples the redox reaction to proton translocation (for every two electrons transferred, four hydrogen ions are translocated across the cytoplasmic membrane), and thus conserves the redox energy in a proton gradient. This Escherichia coli (strain K12) protein is NADH-quinone oxidoreductase subunit L (nuoL).